The chain runs to 356 residues: Probable arabinogalactan endo-beta-1,4-galactanase A (356 aa).

Residues 1–21 (MLGKTVLLPLLVLLCHSLASA) form the signal peptide. N133 is a glycosylation site (N-linked (GlcNAc...) asparagine). The Proton donor role is filled by E157. The active-site Nucleophile is E268.

It belongs to the glycosyl hydrolase 53 family.

The protein resides in the secreted. The enzyme catalyses The enzyme specifically hydrolyzes (1-&gt;4)-beta-D-galactosidic linkages in type I arabinogalactans.. Functionally, endogalactanase involved in the degradation of plant cell wall polysaccharides, and more particularly of hairy regions of pectin. This Aspergillus fumigatus (strain CBS 144.89 / FGSC A1163 / CEA10) (Neosartorya fumigata) protein is Probable arabinogalactan endo-beta-1,4-galactanase A (galA).